A 149-amino-acid polypeptide reads, in one-letter code: Calmodulin (149 aa).

Ala2 carries the post-translational modification N-acetylalanine. EF-hand domains lie at 8 to 43, 44 to 79, 81 to 116, and 117 to 149; these read EQIAEFKEAFSLFDKDGDGCITTKELGTVMRSLGQN, PTEAELQDMINEVDADGNGTIDFPEFLNLMARKMKD, DSEEELKEAFRVFDKDQNGFISAAELRHVMTNLGEK, and LTDEEVDEMIREADVDGDGQINYEEFVKVMMAK. The Ca(2+) site is built by Asp21, Asp23, Asp25, Cys27, Glu32, Asp57, Asp59, Asn61, Thr63, Glu68, Asp94, Asp96, Asn98, and Glu105. The residue at position 116 (Lys116) is an N6,N6,N6-trimethyllysine. Positions 130, 132, 134, 136, and 141 each coordinate Ca(2+).

It belongs to the calmodulin family. The N-terminus is blocked.

Its function is as follows. Calmodulin mediates the control of a large number of enzymes, ion channels and other proteins by Ca(2+). Among the enzymes to be stimulated by the calmodulin-Ca(2+) complex are a number of protein kinases and phosphatases. This chain is Calmodulin, found in Spinacia oleracea (Spinach).